Here is a 118-residue protein sequence, read N- to C-terminus: Small ribosomal subunit protein uS12cz/uS12cy (118 aa).

This sequence belongs to the universal ribosomal protein uS12 family. As to quaternary structure, part of the 30S ribosomal subunit.

It is found in the plastid. The protein resides in the chloroplast. Functionally, with S4 and S5 plays an important role in translational accuracy. Located at the interface of the 30S and 50S subunits. This Helianthus annuus (Common sunflower) protein is Small ribosomal subunit protein uS12cz/uS12cy (rps12-A).